The chain runs to 329 residues: MQEFEFAVPAPSRVSPDLARARARHLDWVHAMDLVRGEEARRRYEFSCVADIGAYGYPHATGADLDLCVDVLGWTFLFDDQFDAGDGRERDALAVCAELTDLLWKGTAATAASPPIVVAFSDCWERMRAGMSDAWRRRTVHEWVDYLAGWPTKLADRAHGAVLDPAAHLRARHRTICCRPLFALAERVGGYEVPRRAWHSSRLDGMRFTTSDAVIGMNELHSFEKDRAQGHANLVLSLVHHGGLTGPEAVTRVCDLVQGSIESFLRLRSGLPELGRALGVEGAVLDRYADALSAFCRGYHDWGRGASRYTTRDHPGDLGLENLVARSSG.

Asp-79 lines the Mg(2+) pocket. A DDXXD motif motif is present at residues Asp-79–Asp-83. Arg-172 contributes to the substrate binding site. Mg(2+) is bound by residues Asn-218 and Ser-222. An NXXXSXXXD motif motif is present at residues Asn-218–Asp-226. Lys-225 is a substrate binding site. Asp-226 lines the Mg(2+) pocket. A substrate-binding site is contributed by Arg-308 to Tyr-309.

This sequence belongs to the terpene synthase family. As to quaternary structure, homodimer. Mg(2+) serves as cofactor.

The enzyme catalyses (2E)-geranyl diphosphate + H2O = (R)-linalool + diphosphate. It catalyses the reaction (2E,6E)-farnesyl diphosphate + H2O = (6E)-nerolidol + diphosphate. In terms of biological role, in vitro, catalyzes the formation of R-linalool from geranyl diphosphate (GPP). Can also accept farnesyl diphosphate (FPP) as substrate to produce trans-nerolidol. The sequence is that of R-linalool synthase from Streptomyces clavuligerus.